The primary structure comprises 135 residues: Ribonuclease P protein component (135 aa).

It belongs to the RnpA family. As to quaternary structure, consists of a catalytic RNA component (M1 or rnpB) and a protein subunit.

The enzyme catalyses Endonucleolytic cleavage of RNA, removing 5'-extranucleotides from tRNA precursor.. Functionally, RNaseP catalyzes the removal of the 5'-leader sequence from pre-tRNA to produce the mature 5'-terminus. It can also cleave other RNA substrates such as 4.5S RNA. The protein component plays an auxiliary but essential role in vivo by binding to the 5'-leader sequence and broadening the substrate specificity of the ribozyme. This Xylella fastidiosa (strain Temecula1 / ATCC 700964) protein is Ribonuclease P protein component.